The primary structure comprises 329 residues: Ketol-acid reductoisomerase (NADP(+)) (329 aa).

A KARI N-terminal Rossmann domain is found at 2 to 182 (TQLFYDTDAD…GGTRAGILET (181 aa)). Residues 25–28 (YGSQ), Ser-51, Ser-53, and 83–86 (DEFQ) contribute to the NADP(+) site. His-108 is a catalytic residue. Gly-134 provides a ligand contact to NADP(+). The KARI C-terminal knotted domain maps to 183-328 (NFKEETETDL…KGLRSMFSWL (146 aa)). 4 residues coordinate Mg(2+): Asp-191, Glu-195, Glu-227, and Glu-231. Ser-252 lines the substrate pocket.

This sequence belongs to the ketol-acid reductoisomerase family. It depends on Mg(2+) as a cofactor.

The enzyme catalyses (2R)-2,3-dihydroxy-3-methylbutanoate + NADP(+) = (2S)-2-acetolactate + NADPH + H(+). It carries out the reaction (2R,3R)-2,3-dihydroxy-3-methylpentanoate + NADP(+) = (S)-2-ethyl-2-hydroxy-3-oxobutanoate + NADPH + H(+). Its pathway is amino-acid biosynthesis; L-isoleucine biosynthesis; L-isoleucine from 2-oxobutanoate: step 2/4. It functions in the pathway amino-acid biosynthesis; L-valine biosynthesis; L-valine from pyruvate: step 2/4. In terms of biological role, involved in the biosynthesis of branched-chain amino acids (BCAA). Catalyzes an alkyl-migration followed by a ketol-acid reduction of (S)-2-acetolactate (S2AL) to yield (R)-2,3-dihydroxy-isovalerate. In the isomerase reaction, S2AL is rearranged via a Mg-dependent methyl migration to produce 3-hydroxy-3-methyl-2-ketobutyrate (HMKB). In the reductase reaction, this 2-ketoacid undergoes a metal-dependent reduction by NADPH to yield (R)-2,3-dihydroxy-isovalerate. In Prochlorococcus marinus (strain AS9601), this protein is Ketol-acid reductoisomerase (NADP(+)).